A 546-amino-acid chain; its full sequence is Cytochrome P450 monooxygenase 219 (546 aa).

An N-terminal signal peptide occupies residues 1 to 22 (MATLIVLLYGLLAFGTVWLVRR). N-linked (GlcNAc...) asparagine glycans are attached at residues Asn-367 and Asn-441. Residue Cys-487 coordinates heme.

This sequence belongs to the cytochrome P450 family. Heme is required as a cofactor.

It participates in secondary metabolite biosynthesis. Its function is as follows. Cytochrome P450 monooxygenase that is able to use testosterone, anthracene, carbazole, pyrene, phenanthrene and trans-stilbene as substrates for oxidation. These multifunctional properties against a series of polycyclic aromatic hydrocarbons (PAHs) suggest that CYP219 would play important roles, at least in part, in fungal metabolic systems involved in xenobiotic detoxification. This Postia placenta (strain ATCC 44394 / Madison 698-R) (Brown rot fungus) protein is Cytochrome P450 monooxygenase 219.